Consider the following 1343-residue polypeptide: DNA-directed RNA polymerase subunit beta (1343 aa).

It belongs to the RNA polymerase beta chain family. As to quaternary structure, the RNAP catalytic core consists of 2 alpha, 1 beta, 1 beta' and 1 omega subunit. When a sigma factor is associated with the core the holoenzyme is formed, which can initiate transcription.

The enzyme catalyses RNA(n) + a ribonucleoside 5'-triphosphate = RNA(n+1) + diphosphate. In terms of biological role, DNA-dependent RNA polymerase catalyzes the transcription of DNA into RNA using the four ribonucleoside triphosphates as substrates. This Haemophilus influenzae (strain 86-028NP) protein is DNA-directed RNA polymerase subunit beta.